We begin with the raw amino-acid sequence, 211 residues long: Riboflavin kinase (211 aa).

Residues 1–81 (MKCIDRRLIG…DLLRYFNILS (81 aa)) form an H-T-H motif-like region. The segment at 82-211 (IRLSGRVVSG…DRVEIEIYLE (130 aa)) is riboflavin kinase. 91 to 96 (GLGEGA) lines the CDP pocket. Mg(2+)-binding residues include T120 and N122. Residues T177 and E185 each contribute to the FMN site. 190 to 193 (FKLR) serves as a coordination point for CDP.

Belongs to the archaeal riboflavin kinase family. Requires Mg(2+) as cofactor.

The enzyme catalyses riboflavin + CTP = CDP + FMN + H(+). It participates in cofactor biosynthesis; FMN biosynthesis; FMN from riboflavin (CTP route): step 1/1. Its function is as follows. Catalyzes the CTP-dependent phosphorylation of riboflavin (vitamin B2) to form flavin mononucleotide (FMN). This chain is Riboflavin kinase (ribK), found in Pyrobaculum islandicum (strain DSM 4184 / JCM 9189 / GEO3).